A 210-amino-acid polypeptide reads, in one-letter code: Imidazoleglycerol-phosphate dehydratase (210 aa).

It belongs to the imidazoleglycerol-phosphate dehydratase family.

The enzyme catalyses D-erythro-1-(imidazol-4-yl)glycerol 3-phosphate = 3-(imidazol-4-yl)-2-oxopropyl phosphate + H2O. Its pathway is amino-acid biosynthesis; L-histidine biosynthesis; L-histidine from 5-phospho-alpha-D-ribose 1-diphosphate: step 6/9. The chain is Imidazoleglycerol-phosphate dehydratase (HIS3) from Candida glabrata (strain ATCC 2001 / BCRC 20586 / JCM 3761 / NBRC 0622 / NRRL Y-65 / CBS 138) (Yeast).